We begin with the raw amino-acid sequence, 483 residues long: 3-isopropylmalate dehydratase large subunit (483 aa).

3 residues coordinate [4Fe-4S] cluster: Cys361, Cys424, and Cys427.

Belongs to the aconitase/IPM isomerase family. LeuC type 1 subfamily. As to quaternary structure, heterodimer of LeuC and LeuD. [4Fe-4S] cluster is required as a cofactor.

It catalyses the reaction (2R,3S)-3-isopropylmalate = (2S)-2-isopropylmalate. Its pathway is amino-acid biosynthesis; L-leucine biosynthesis; L-leucine from 3-methyl-2-oxobutanoate: step 2/4. Functionally, catalyzes the isomerization between 2-isopropylmalate and 3-isopropylmalate, via the formation of 2-isopropylmaleate. In Polaromonas naphthalenivorans (strain CJ2), this protein is 3-isopropylmalate dehydratase large subunit.